We begin with the raw amino-acid sequence, 146 residues long: Hemoglobin subunit beta-1 (146 aa).

Residues 2-146 (HWTEKERTII…VVSALGKQYH (145 aa)) form the Globin domain. Heme b contacts are provided by H63 and H92.

This sequence belongs to the globin family. As to quaternary structure, hb1 is a heterotetramer of two alpha chains and two beta-1 chains. As to expression, red blood cells.

Its function is as follows. Involved in oxygen transport from gills to the various peripheral tissues. The chain is Hemoglobin subunit beta-1 from Dissostichus eleginoides (Patagonian toothfish).